The following is a 253-amino-acid chain: Octanoyltransferase (253 aa).

The region spanning 47–236 (PETPDQVWLV…ALCEVLAARE (190 aa)) is the BPL/LPL catalytic domain. Substrate is bound by residues 87–94 (RGGQITYH), 159–161 (ALG), and 172–174 (GVS). The active-site Acyl-thioester intermediate is C190.

It belongs to the LipB family.

The protein localises to the cytoplasm. It catalyses the reaction octanoyl-[ACP] + L-lysyl-[protein] = N(6)-octanoyl-L-lysyl-[protein] + holo-[ACP] + H(+). It functions in the pathway protein modification; protein lipoylation via endogenous pathway; protein N(6)-(lipoyl)lysine from octanoyl-[acyl-carrier-protein]: step 1/2. Its function is as follows. Catalyzes the transfer of endogenously produced octanoic acid from octanoyl-acyl-carrier-protein onto the lipoyl domains of lipoate-dependent enzymes. Lipoyl-ACP can also act as a substrate although octanoyl-ACP is likely to be the physiological substrate. In Cupriavidus pinatubonensis (strain JMP 134 / LMG 1197) (Cupriavidus necator (strain JMP 134)), this protein is Octanoyltransferase.